Reading from the N-terminus, the 674-residue chain is DNA ligase (674 aa).

Residues 35 to 39 (DFEFD), 84 to 85 (SL), and Glu118 contribute to the NAD(+) site. Catalysis depends on Lys120, which acts as the N6-AMP-lysine intermediate. NAD(+) contacts are provided by Arg141, Glu184, Lys297, and Lys321. 4 residues coordinate Zn(2+): Cys415, Cys418, Cys433, and Cys439. The 77-residue stretch at 598–674 (QVNRNFEGVT…VSEDEFEAML (77 aa)) folds into the BRCT domain.

The protein belongs to the NAD-dependent DNA ligase family. LigA subfamily. Mg(2+) serves as cofactor. It depends on Mn(2+) as a cofactor.

The catalysed reaction is NAD(+) + (deoxyribonucleotide)n-3'-hydroxyl + 5'-phospho-(deoxyribonucleotide)m = (deoxyribonucleotide)n+m + AMP + beta-nicotinamide D-nucleotide.. DNA ligase that catalyzes the formation of phosphodiester linkages between 5'-phosphoryl and 3'-hydroxyl groups in double-stranded DNA using NAD as a coenzyme and as the energy source for the reaction. It is essential for DNA replication and repair of damaged DNA. In Pelodictyon phaeoclathratiforme (strain DSM 5477 / BU-1), this protein is DNA ligase.